We begin with the raw amino-acid sequence, 720 residues long: Calcium/calmodulin-dependent protein kinase type II (720 aa).

The Protein kinase domain maps to Y12–I269. ATP is bound by residues L18–V26 and K41. The Proton acceptor role is filled by D134. T284 carries the phosphothreonine; by autocatalysis modification. Disordered stretches follow at residues S317–S345 and D504–A586. 2 stretches are compositionally biased toward polar residues: residues D504–L514 and P526–I540. Residues S569–A586 show a composition bias toward low complexity.

It belongs to the protein kinase superfamily. CAMK Ser/Thr protein kinase family. CaMK subfamily. Dodecamer. Subunits are tightly packed around a central ring-shaped scaffold with extensive contacts between the regulatory segment of one kinase and the catalytic domain of another enabling cooperative activation of a subunit by the adjacent molecule. Interacts with and phosphorylates daf-16; the interaction promotes daf-16 nuclear localization. Interacts with egl-2 and tir-1. Interacts with nsy-1. The cofactor is Mg(2+). Expressed in the nervous system. Observed in the ADF and AWC neurons. Position in AWC neurons is regulated by microtubules. Localized to clusters in ventral cord neurites which appear to be required for glr-1 trafficking. Also present in oocytes.

It localises to the cytoplasm. Its subcellular location is the cell projection. It is found in the axon. The protein localises to the perikaryon. The enzyme catalyses L-seryl-[protein] + ATP = O-phospho-L-seryl-[protein] + ADP + H(+). It carries out the reaction L-threonyl-[protein] + ATP = O-phospho-L-threonyl-[protein] + ADP + H(+). Ca2(+)/calmodulin binding removes an autoinhibitory regulatory segment located C-terminal to the kinase domain. This releases the catalytic activity of the enzyme and makes accessible a regulatory residue Thr-284. Phosphorylation of Thr-284 by another kinase domain within the oligomeric holoenzyme keeps CaMKII active in the absence of Ca(2+)/calmodulin by preventing the rebinding of the regulatory segment to the kinase domain and by increasing the affinity of calmodulin for the enzyme. Can respond to high-frequency Ca(2+) pulses to become Ca(2+) independent. Acts in the signaling of a variety of pathways and processes. Phosphorylates 'Ser-319' of daf-16 in response to stress signals, such as heat, starvation and oxidation, which plays a role in prolonging lifespan. Required for viability under chronic osmotic stress in which it acts downstream of osr-1. Has roles in locomotion, oocyte maturation, brood size, egg laying, defecation, meiotic maturation and neuronal cell fate specification. Required for the regulation of synaptic density and neuromuscular junction morphology. Regulates the synaptic trafficking of glr-1. Bidirectional modulator of neurotransmitter release with negative modulatory effects mainly mediated via slo-1 activation. Involved in activation of ADF neurons and increased tph-1 transcription following exposure to pathogenic bacteria which leads to learned olfactory aversion to the bacteria. Implicated in the muscle regulation of spicule protraction. In conjunction with egl-2 has a role in the suppression of mating behavior under food deprivation to encourage foraging. Involved in restricting str-2 expression to only one of the two AWC neurons. May suppress the functional response to an internal pacemaker, perhaps by modulating the activity of the IP3 receptor. This Caenorhabditis elegans protein is Calcium/calmodulin-dependent protein kinase type II (unc-43).